The following is a 434-amino-acid chain: Adenylosuccinate synthetase (434 aa).

Residues Gly-22–Lys-28 and Gly-50–Thr-52 contribute to the GTP site. Catalysis depends on Asp-23, which acts as the Proton acceptor. Positions 23 and 50 each coordinate Mg(2+). IMP is bound by residues Asp-23–Lys-26, Asn-48–His-51, Thr-139, Arg-153, Gln-234, Thr-249, and Arg-313. His-51 acts as the Proton donor in catalysis. Ala-309 to Arg-315 is a binding site for substrate. Residues Arg-315, Lys-341 to Asp-343, and Ser-423 to Gly-425 each bind GTP.

Belongs to the adenylosuccinate synthetase family. Homodimer. The cofactor is Mg(2+).

The protein localises to the cytoplasm. The catalysed reaction is IMP + L-aspartate + GTP = N(6)-(1,2-dicarboxyethyl)-AMP + GDP + phosphate + 2 H(+). The protein operates within purine metabolism; AMP biosynthesis via de novo pathway; AMP from IMP: step 1/2. In terms of biological role, plays an important role in the de novo pathway of purine nucleotide biosynthesis. Catalyzes the first committed step in the biosynthesis of AMP from IMP. The polypeptide is Adenylosuccinate synthetase (Chlorobium phaeobacteroides (strain DSM 266 / SMG 266 / 2430)).